A 288-amino-acid chain; its full sequence is Elongation factor Ts (288 aa).

Positions 79–82 (TDFV) are involved in Mg(2+) ion dislocation from EF-Tu.

The protein belongs to the EF-Ts family.

The protein localises to the cytoplasm. In terms of biological role, associates with the EF-Tu.GDP complex and induces the exchange of GDP to GTP. It remains bound to the aminoacyl-tRNA.EF-Tu.GTP complex up to the GTP hydrolysis stage on the ribosome. The protein is Elongation factor Ts of Ehrlichia canis (strain Jake).